The primary structure comprises 353 residues: GTPase Obg (353 aa).

Residues 1 to 159 enclose the Obg domain; it reads MRFVDEVVIN…RVIRLELKLL (159 aa). The OBG-type G domain maps to 160 to 334; it reads ADVGLLGMPN…LCTAIMQELT (175 aa). GTP-binding positions include 166 to 173, 191 to 195, 213 to 216, 284 to 287, and 315 to 317; these read GMPNAGKS, FTTLH, DIPG, NKMD, and SAA. S173 and T193 together coordinate Mg(2+).

Belongs to the TRAFAC class OBG-HflX-like GTPase superfamily. OBG GTPase family. As to quaternary structure, monomer. It depends on Mg(2+) as a cofactor.

The protein resides in the cytoplasm. Its function is as follows. An essential GTPase which binds GTP, GDP and possibly (p)ppGpp with moderate affinity, with high nucleotide exchange rates and a fairly low GTP hydrolysis rate. Plays a role in control of the cell cycle, stress response, ribosome biogenesis and in those bacteria that undergo differentiation, in morphogenesis control. This is GTPase Obg from Dichelobacter nodosus (strain VCS1703A).